An 802-amino-acid polypeptide reads, in one-letter code: Penicillin G acylase (802 aa).

A signal peptide spans 1–24; it reads MKTKWLISVIILFVFIFPQNLVFA. Residue glutamate 177 coordinates Ca(2+). Residues 235 to 265 constitute a propeptide, spacer peptide; sequence SAVIKASEKVGKERENFVQTSEELGLPLKIG. The active-site Nucleophile is the serine 266. Aspartate 341 lines the Ca(2+) pocket.

This sequence belongs to the peptidase S45 family. As to quaternary structure, heterodimer of an alpha subunit and a beta subunit processed from the same precursor. Ca(2+) serves as cofactor.

The protein localises to the secreted. It carries out the reaction a penicillin + H2O = 6-aminopenicillanate + a carboxylate. In Priestia megaterium (Bacillus megaterium), this protein is Penicillin G acylase (pac).